A 451-amino-acid chain; its full sequence is Methylenetetrahydrofolate--tRNA-(uracil-5-)-methyltransferase TrmFO (451 aa).

10–15 (GGGLAG) lines the FAD pocket.

This sequence belongs to the MnmG family. TrmFO subfamily. Requires FAD as cofactor.

Its subcellular location is the cytoplasm. It catalyses the reaction uridine(54) in tRNA + (6R)-5,10-methylene-5,6,7,8-tetrahydrofolate + NADH + H(+) = 5-methyluridine(54) in tRNA + (6S)-5,6,7,8-tetrahydrofolate + NAD(+). It carries out the reaction uridine(54) in tRNA + (6R)-5,10-methylene-5,6,7,8-tetrahydrofolate + NADPH + H(+) = 5-methyluridine(54) in tRNA + (6S)-5,6,7,8-tetrahydrofolate + NADP(+). In terms of biological role, catalyzes the folate-dependent formation of 5-methyl-uridine at position 54 (M-5-U54) in all tRNAs. This Anaeromyxobacter sp. (strain Fw109-5) protein is Methylenetetrahydrofolate--tRNA-(uracil-5-)-methyltransferase TrmFO.